The sequence spans 614 residues: Probable ATP-dependent RNA helicase DDX5 (614 aa).

Basic and acidic residues predominate over residues 1–15 (MSGYSSDRDRGRDRG). Residues 1-39 (MSGYSSDRDRGRDRGFGAPRFGGSRAGPLSGKKFGNPGE) are disordered. At serine 24 the chain carries Phosphoserine. Lysine 32 is subject to N6-acetyllysine; alternate. Lysine 32 is covalently cross-linked (Glycyl lysine isopeptide (Lys-Gly) (interchain with G-Cter in SUMO2); alternate). An N6-acetyllysine mark is found at lysine 33 and lysine 40. Residue lysine 45 forms a Glycyl lysine isopeptide (Lys-Gly) (interchain with G-Cter in SUMO2) linkage. Residue lysine 53 forms a Glycyl lysine isopeptide (Lys-Gly) (interchain with G-Cter in SUMO2); alternate linkage. Residue lysine 53 forms a Glycyl lysine isopeptide (Lys-Gly) (interchain with G-Cter in SUMO); alternate linkage. A Glycyl lysine isopeptide (Lys-Gly) (interchain with G-Cter in SUMO1); alternate cross-link involves residue lysine 53. The short motif at 94 to 122 (LNFYEANFPANVMDVIARQNFTEPTAIQA) is the Q motif element. Residues 114–116 (FTE), glutamine 121, and 138–145 (AQTGSGKT) each bind ATP. Residues 125 to 300 (WPVALSGLDM…EDFLKDYIHI (176 aa)) enclose the Helicase ATP-binding domain. At lysine 236 the chain carries N6-acetyllysine. Positions 248–251 (DEAD) match the DEAD box motif. Position 297 is a phosphotyrosine (tyrosine 297). One can recognise a Helicase C-terminal domain in the interval 328-475 (KLIRLMEEIM…AINPKLLQLV (148 aa)). Residues lysine 340, lysine 343, lysine 388, lysine 391, lysine 411, lysine 437, lysine 451, and lysine 470 each participate in a glycyl lysine isopeptide (Lys-Gly) (interchain with G-Cter in SUMO2) cross-link. The tract at residues 477 to 504 (DRGSGRSRGRGGMKDDRRDRYSAGKRGG) is disordered. Residues 477–614 (DRGSGRSRGR…GYPMPTGYSQ (138 aa)) form a transactivation domain region. Phosphoserine is present on serine 480. The span at 488-498 (GMKDDRRDRYS) shows a compositional bias: basic and acidic residues. Phosphoserine is present on serine 520. Residue lysine 523 forms a Glycyl lysine isopeptide (Lys-Gly) (interchain with G-Cter in SUMO2) linkage.

This sequence belongs to the DEAD box helicase family. DDX5/DBP2 subfamily. Identified in the spliceosome C complex. Component of a ribonucleoprotein complex containing mRNAs and RNA-binding proteins including DDX5, HNRNPH2 and SRSF1 as well as splicing regulator ARVCF. Interacts with RBM4; the interaction occurs in an RNA-independent manner. Interacts with AGO1 and AGO2. Interacts with ESR1, AR, EP300, CREBBP, POLR2A, TP53, RUNX2 and HDAC1. Self-associates. Interacts with DDX17. Interacts with BRDT. The large PER complex involved in the repression of transcriptional termination is composed of at least PER2, CDK9, DDX5, DHX9, NCBP1 and POLR2A (active). Interacts with DHX36; this interaction occurs in a RNA-dependent manner. Interacts with NUPR1. Interacts with ERCC6. Interacts with DDX3X in the cytoplasm; this interaction may be more efficient when both proteins are unphosphorylated. Post-translationally, arg-502 is dimethylated, probably to asymmetric dimethylarginine. In terms of processing, sumoylated; sumoylation, promoted by PIAS1, promotes interaction with HDAC1 and transcriptional repression activity. Sumoylation also significantly increases stability, and reduces polyubiquitination. Polyubiquitinated, leading to proteasomal degradation. Post-translationally, weakly phosphorylated in the G1/S phase of the cell cycle and much more at G2/M, especially at Thr and Tyr residues.

The protein resides in the nucleus. It is found in the nucleolus. Its subcellular location is the nucleus speckle. The protein localises to the cytoplasm. The catalysed reaction is ATP + H2O = ADP + phosphate + H(+). Involved in the alternative regulation of pre-mRNA splicing; its RNA helicase activity is necessary for increasing tau exon 10 inclusion and occurs in a RBM4-dependent manner. Binds to the tau pre-mRNA in the stem-loop region downstream of exon 10. The rate of ATP hydrolysis is highly stimulated by single-stranded RNA. Involved in transcriptional regulation; the function is independent of the RNA helicase activity. Transcriptional coactivator for androgen receptor AR but probably not ESR1. Synergizes with DDX17 and SRA1 RNA to activate MYOD1 transcriptional activity and involved in skeletal muscle differentiation. Transcriptional coactivator for p53/TP53 and involved in p53/TP53 transcriptional response to DNA damage and p53/TP53-dependent apoptosis. Transcriptional coactivator for RUNX2 and involved in regulation of osteoblast differentiation. Acts as a transcriptional repressor in a promoter-specific manner; the function probably involves association with histone deacetylases, such as HDAC1. As component of a large PER complex is involved in the inhibition of 3' transcriptional termination of circadian target genes such as PER1 and NR1D1 and the control of the circadian rhythms. This is Probable ATP-dependent RNA helicase DDX5 (DDX5) from Homo sapiens (Human).